The primary structure comprises 434 residues: Enolase (434 aa).

Gln-166 contributes to the (2R)-2-phosphoglycerate binding site. Glu-208 (proton donor) is an active-site residue. Mg(2+)-binding residues include Asp-245, Glu-290, and Asp-317. Positions 342, 371, 372, and 393 each coordinate (2R)-2-phosphoglycerate. Lys-342 functions as the Proton acceptor in the catalytic mechanism.

This sequence belongs to the enolase family. Mg(2+) serves as cofactor.

Its subcellular location is the cytoplasm. The protein localises to the secreted. It localises to the cell surface. It catalyses the reaction (2R)-2-phosphoglycerate = phosphoenolpyruvate + H2O. Its pathway is carbohydrate degradation; glycolysis; pyruvate from D-glyceraldehyde 3-phosphate: step 4/5. In terms of biological role, catalyzes the reversible conversion of 2-phosphoglycerate (2-PG) into phosphoenolpyruvate (PEP). It is essential for the degradation of carbohydrates via glycolysis. The sequence is that of Enolase from Caldicellulosiruptor bescii (strain ATCC BAA-1888 / DSM 6725 / KCTC 15123 / Z-1320) (Anaerocellum thermophilum).